The sequence spans 114 residues: MIPGGGQPNMQQLLQQAQKMQQDLAAAQEELARTEVDGQAGGGLVKATVTGSGELRALVIDPKAVDPEDTETLADLVVAAVQAANENAQALQQEKLGPLAQGLGGGGGIPGLPF.

Belongs to the YbaB/EbfC family. In terms of assembly, homodimer.

It is found in the cytoplasm. It localises to the nucleoid. Functionally, binds to DNA and alters its conformation. May be involved in regulation of gene expression, nucleoid organization and DNA protection. The polypeptide is Nucleoid-associated protein SGR_3378 (Streptomyces griseus subsp. griseus (strain JCM 4626 / CBS 651.72 / NBRC 13350 / KCC S-0626 / ISP 5235)).